A 359-amino-acid chain; its full sequence is 3-dehydroshikimate dehydratase (359 aa).

The protein belongs to the bacterial two-domain DSD family. As to quaternary structure, monomer.

It carries out the reaction 3-dehydroshikimate = 3,4-dihydroxybenzoate + H2O. The protein operates within aromatic compound metabolism; 3,4-dihydroxybenzoate biosynthesis; 3,4-dihydroxybenzoate from 3-dehydroquinate: step 2/2. Divalent cations such as Mg(2+), but also MO(2+), Mn(2+), Ba(2+), and Co(2+) activate the enzyme, whereas monovalent cations as K(+), Na(+), and NH4(+) decrease its activity slightly. Functionally, 3-dehydroshikimate dehydratase; part of the qa gene cluster that mediates the catabolism of quinic acid (QA) and as such, allows the use of QA as a sole carbon source. Catalyzes the third reaction in the inducible quinic acid catabolic pathway by converting dehydroshikimate to protocatechuate. The qa cluster encodes 3 inducible enymes (qa-2, qa-3 and qa-4) catalyzing the first three reactions in the catabolism of quinic acid to protocatechuic acid (also known as 3,4-Dihydroxybenzoic acid). In Neurospora crassa (strain ATCC 24698 / 74-OR23-1A / CBS 708.71 / DSM 1257 / FGSC 987), this protein is 3-dehydroshikimate dehydratase.